The chain runs to 453 residues: Allantoinase (453 aa).

Residues His59, His61, Lys146, His186, His242, and Asp315 each contribute to the Zn(2+) site. Lys146 is subject to N6-carboxylysine.

The protein belongs to the metallo-dependent hydrolases superfamily. Allantoinase family. As to quaternary structure, homotetramer. Zn(2+) serves as cofactor. In terms of processing, carboxylation allows a single lysine to coordinate two zinc ions.

The enzyme catalyses (S)-allantoin + H2O = allantoate + H(+). The protein operates within nitrogen metabolism; (S)-allantoin degradation; allantoate from (S)-allantoin: step 1/1. In terms of biological role, catalyzes the conversion of allantoin (5-ureidohydantoin) to allantoic acid by hydrolytic cleavage of the five-member hydantoin ring. In Salmonella paratyphi B (strain ATCC BAA-1250 / SPB7), this protein is Allantoinase.